Consider the following 263-residue polypeptide: Type-2Bb cytolytic delta-endotoxin (263 aa).

This sequence belongs to the cyt1/cyt2 endotoxin family. In terms of processing, active after proteolytic processing.

Its function is as follows. Kills the larvae of dipteran insects by making pores in the epithelial cell membrane of the insect midgut. This is Type-2Bb cytolytic delta-endotoxin (cyt2Bb1) from Bacillus thuringiensis subsp. jegathesan.